The chain runs to 127 residues: Large ribosomal subunit protein bL12 (127 aa).

The interval 101 to 127 (VKTGVSKEEAEDAKKQLVESGAEVEIK) is disordered. Residues 105 to 117 (VSKEEAEDAKKQL) show a composition bias toward basic and acidic residues.

The protein belongs to the bacterial ribosomal protein bL12 family. In terms of assembly, homodimer. Part of the ribosomal stalk of the 50S ribosomal subunit. Forms a multimeric L10(L12)X complex, where L10 forms an elongated spine to which 2 to 4 L12 dimers bind in a sequential fashion. Binds GTP-bound translation factors.

Forms part of the ribosomal stalk which helps the ribosome interact with GTP-bound translation factors. Is thus essential for accurate translation. This Geobacter metallireducens (strain ATCC 53774 / DSM 7210 / GS-15) protein is Large ribosomal subunit protein bL12.